The sequence spans 82 residues: Acyl carrier protein (82 aa).

A Carrier domain is found at 4–79; the sequence is EKIFQELKNI…DVVDIIESNL (76 aa). Serine 39 carries the O-(pantetheine 4'-phosphoryl)serine modification.

The protein belongs to the acyl carrier protein (ACP) family. Post-translationally, 4'-phosphopantetheine is transferred from CoA to a specific serine of apo-ACP by AcpS. This modification is essential for activity because fatty acids are bound in thioester linkage to the sulfhydryl of the prosthetic group.

It is found in the cytoplasm. It functions in the pathway lipid metabolism; fatty acid biosynthesis. Its function is as follows. Carrier of the growing fatty acid chain in fatty acid biosynthesis. In Coprothermobacter proteolyticus (strain ATCC 35245 / DSM 5265 / OCM 4 / BT), this protein is Acyl carrier protein.